A 164-amino-acid polypeptide reads, in one-letter code: Transcription factor MafF (164 aa).

The interval 51 to 76 is basic motif; that stretch reads RLKQRRRTLKNRGYAASCRVKRVCQK. Residues 51 to 114 form the bZIP domain; the sequence is RLKQRRRTLK…DALRGKCEAL (64 aa). The segment at 79-93 is leucine-zipper; that stretch reads LQKQKSELEREVDKL. The interval 141–164 is disordered; sequence KSTPGSGSGPAHGPDPAHGPASCS. The segment covering 149 to 164 has biased composition (low complexity); the sequence is GPAHGPDPAHGPASCS.

It belongs to the bZIP family. Maf subfamily. Monomer and homo- or heterodimer. Interacts with MIP. Forms high affinity heterodimers with members of the CNC-bZIP family such as NFE2L1/NRF1. As to expression, expressed in the term myometrium and kidney.

It localises to the nucleus. Its function is as follows. Since they lack a putative transactivation domain, the small Mafs behave as transcriptional repressors when they dimerize among themselves. However, they seem to serve as transcriptional activators by dimerizing with other (usually larger) basic-zipper proteins, such as NFE2L1/NRF1, and recruiting them to specific DNA-binding sites. Interacts with the upstream promoter region of the oxytocin receptor gene. May be a transcriptional enhancer in the up-regulation of the oxytocin receptor gene at parturition. In Homo sapiens (Human), this protein is Transcription factor MafF (MAFF).